Here is an 840-residue protein sequence, read N- to C-terminus: Urease (840 aa).

The 439-residue stretch at 402-840 folds into the Urease domain; it reads GAIDCHVHYI…VPLSRNYFLF (439 aa). Ni(2+) is bound by residues histidine 407, histidine 409, and lysine 490. Residue lysine 490 is modified to N6-carboxylysine. Substrate is bound at residue histidine 492. Residues histidine 519 and histidine 545 each contribute to the Ni(2+) site. Catalysis depends on histidine 593, which acts as the Proton donor. Aspartate 633 contacts Ni(2+).

It in the C-terminal section; belongs to the metallo-dependent hydrolases superfamily. Urease alpha subunit family. In terms of assembly, homohexamer. Other oligomeric forms may exist depending on pH and presence of salts. Requires Ni cation as cofactor. Post-translationally, carboxylation allows a single lysine to coordinate two nickel ions.

It carries out the reaction urea + 2 H2O + H(+) = hydrogencarbonate + 2 NH4(+). It participates in nitrogen metabolism; urea degradation; CO(2) and NH(3) from urea (urease route): step 1/1. Its activity is regulated as follows. P-hydroxymercuribenzoate irreversibly abolishes ureolytic activity, but does not inhibit the ability to activate platelets. Also inhibited by acetohydroxamic acid (AHA), a chelator of Ni2+ and Zn2+ ions. Its function is as follows. Urea hydrolase involved in nitrogen recycling from ureide, purine, and arginine catabolism. Is known to be highly toxic and lethal when given by intravenous route, producing convulsions and other signs of central nervous system intoxication associated with the high levels of ammonia formed in the blood of mice and rabbits. Is neurotoxic in mammals, when directly injected into hippocampus. It may induce seizures by acting at a neuronal network level, thereby disturbing electroencephalographic rhythms and causing metabolic alterations in key areas related to epileptogenesis and to neurogenic pulmonary edema. It increases calcium influx and neuronal firing rate in the hippocampus. Is able to insert itself into lipid bilayers, altering physicochemical properties of artificial membranes, and forming cation-selective ion channels. In vitro, has the ability to induce platelet aggregation, platelet granules secretion and release of ATP. In contrast to canatoxin, another urease from C.ensiformis, is not lethal to mice when intraperitoneally injected. This is Urease from Canavalia ensiformis (Jack bean).